The sequence spans 330 residues: Putative pentatricopeptide repeat-containing protein At5g36300 (330 aa).

9 PPR repeats span residues 10 to 44, 45 to 75, 83 to 113, 114 to 148, 149 to 179, 185 to 215, 231 to 265, 266 to 296, and 302 to 330; these read SLSM…GSRP, DPLS…VVRF, VRLY…KFRL, NSFV…GLPM, DVEI…LQRS, NIRT…IFED, SANL…GIEP, NLIM…IKET, and DVVT…LVTL.

Belongs to the PPR family. P subfamily.

The sequence is that of Putative pentatricopeptide repeat-containing protein At5g36300 from Arabidopsis thaliana (Mouse-ear cress).